The sequence spans 355 residues: tRNA uridine(34) hydroxylase (355 aa).

In terms of domain architecture, Rhodanese spans 146–240 (DDPDTLFVDM…YARKAKEQGL (95 aa)). C200 functions as the Cysteine persulfide intermediate in the catalytic mechanism. Residues 333–355 (NKSKGLLQATMHIPSPEKSADEK) form a disordered region.

Belongs to the TrhO family.

The catalysed reaction is uridine(34) in tRNA + AH2 + O2 = 5-hydroxyuridine(34) in tRNA + A + H2O. In terms of biological role, catalyzes oxygen-dependent 5-hydroxyuridine (ho5U) modification at position 34 in tRNAs. This is tRNA uridine(34) hydroxylase from Yersinia pseudotuberculosis serotype O:1b (strain IP 31758).